A 298-amino-acid chain; its full sequence is Enoyl-CoA hydratase ACTT6 (298 aa).

It belongs to the enoyl-CoA hydratase/isomerase family.

It participates in mycotoxin biosynthesis. Functionally, enoyl-CoA hydratase; part of the gene clusters that mediate the biosynthesis of the host-selective toxins (HSTs) ACT-toxins responsible for brown spot of tangerine disease by the tangerine pathotype which affects tangerines and mandarins. ACT-toxins consist of three moieties, 9,10-epoxy-8-hydroxy-9-methyl-decatrienoic acid (EDA), valine and a polyketide. ACT-toxin I is toxic to both citrus and pear; toxin II the 5''-deoxy derivative of ACT-toxin I, is highly toxic to pear and slightly toxic to citrus. On cellular level, ACT-toxins affect plasma membrane of susceptible cells and cause a sudden increase in loss of K(+) after a few minutes of toxin treatment. The acyl-CoA ligase ACTT1, the hydrolase ACTT2, the enoyl-CoA hydratases ACTT3 and ACTT6, and the acyl-CoA synthetase ACTT5 are all involved in the biosynthesis of the AK-, AF- and ACT-toxin common 9,10-epoxy-8-hydroxy-9-methyl-decatrienoic acid (EDA) structural moiety. The exact role of each enzyme, and of additional enzymes identified within the AF-toxin clusters have still to be determined. On the other hand, ACTTS1 to ACTTS4 are specific to the tangerine pathotype. The function of ACTTS3 is to elongate the polyketide chain portion of ACT-toxin that is unique to this toxin. The enoyl-reductase ACTTS2 might complement the missing enoyl-reductase (ER) domain in ACTTS3 in the synthesis of the polyketide portion of ACT-toxin. The roles of the nonribosomal peptide synthetases-related proteins ACTTS1 and ACTTS4 have also still not been elucidated. The sequence is that of Enoyl-CoA hydratase ACTT6 from Alternaria alternata (Alternaria rot fungus).